The sequence spans 168 residues: Cell division inhibitor SulA (168 aa).

The segment at 1–20 (MSTQSVSSHNIESSSFSANQ) is disordered. Positions 105–111 (ALLTGNY) are ftsZ binding. Residues 161–168 (KIHSTLYH) are lon protease binding.

This sequence belongs to the SulA family. In terms of assembly, interacts with FtsZ. Is rapidly cleaved and degraded by the Lon protease once DNA damage is repaired.

Functionally, component of the SOS system and an inhibitor of cell division. Accumulation of SulA causes rapid cessation of cell division and the appearance of long, non-septate filaments. In the presence of GTP, binds a polymerization-competent form of FtsZ in a 1:1 ratio, thus inhibiting FtsZ polymerization and therefore preventing it from participating in the assembly of the Z ring. This mechanism prevents the premature segregation of damaged DNA to daughter cells during cell division. In Pectobacterium atrosepticum (strain SCRI 1043 / ATCC BAA-672) (Erwinia carotovora subsp. atroseptica), this protein is Cell division inhibitor SulA.